A 561-amino-acid chain; its full sequence is Nucleoprotein (561 aa).

The tract at residues 53–237 is binding site for the cap structure m7GTP; the sequence is MRKDKRSEAD…ITQEPAQINI (185 aa). The Mn(2+) site is built by Asp380 and Glu382. Positions 390, 497, 500, and 521 each coordinate Zn(2+). Asp525 provides a ligand contact to Mn(2+).

The protein belongs to the arenaviridae nucleocapsid protein family. In terms of assembly, homomultimerizes to form the nucleocapsid. Binds to viral genomic RNA. Interacts with glycoprotein G2. Interacts with protein Z; this interaction probably directs the encapsidated genome to budding sites. Interacts with protein L; this interaction does not interfere with Z-L interaction. Interacts with host IKBKE (via Protein kinase domain); the interaction inhibits IKBKE kinase activity.

The protein localises to the virion. It is found in the host cytoplasm. Encapsidates the genome, protecting it from nucleases. The encapsidated genomic RNA is termed the nucleocapsid (NC). Serves as template for viral transcription and replication. The increased presence of protein N in host cell does not seem to trigger the switch from transcription to replication as observed in other negative strain RNA viruses. Through the interaction with host IKBKE, strongly inhibits the phosphorylation and nuclear translocation of host IRF3, a protein involved in interferon activation pathway, leading to the inhibition of interferon-beta and IRF3-dependent promoters activation. Also encodes a functional 3'-5' exoribonuclease that degrades preferentially dsRNA substrates and thereby participates in the suppression of interferon induction. The chain is Nucleoprotein from Allpahuayo mammarenavirus (isolate Rat/Peru/CLHP-2472/1997) (ALLV).